Consider the following 116-residue polypeptide: Large ribosomal subunit protein uL18 (116 aa).

It belongs to the universal ribosomal protein uL18 family. In terms of assembly, part of the 50S ribosomal subunit; part of the 5S rRNA/L5/L18/L25 subcomplex. Contacts the 5S and 23S rRNAs.

This is one of the proteins that bind and probably mediate the attachment of the 5S RNA into the large ribosomal subunit, where it forms part of the central protuberance. This chain is Large ribosomal subunit protein uL18, found in Mycoplasma capricolum subsp. capricolum (strain California kid / ATCC 27343 / NCTC 10154).